Reading from the N-terminus, the 168-residue chain is Ribosome maturation factor RimM (168 aa).

In terms of domain architecture, PRC barrel spans 96–168 (KDEYYWGDLV…RIRVAWQKDW (73 aa)).

Belongs to the RimM family. In terms of assembly, binds ribosomal protein uS19.

It localises to the cytoplasm. Functionally, an accessory protein needed during the final step in the assembly of 30S ribosomal subunit, possibly for assembly of the head region. Essential for efficient processing of 16S rRNA. May be needed both before and after RbfA during the maturation of 16S rRNA. It has affinity for free ribosomal 30S subunits but not for 70S ribosomes. The sequence is that of Ribosome maturation factor RimM from Azoarcus sp. (strain BH72).